Reading from the N-terminus, the 994-residue chain is Leucine-rich repeat receptor-like kinase protein FLORAL ORGAN NUMBER1 (994 aa).

Positions 1–17 are cleaved as a signal peptide; it reads MPPTLLLLLLLLPPSLA. LRR repeat units lie at residues 73–93, 94–117, 118–141, 147–171, 172–194, 195–219, 244–268, 269–292, 293–316, 318–340, 341–364, 365–388, 390–412, 413–436, 438–459, 460–483, 484–507, 509–531, 533–555, 556–579, and 581–604; these read AINLTALPLHSGYLPPEIALL, DSLANLTIAACCLPGHVPLELPTL, PSLRHLNLSNNNLSGHFPVPDSGG, FPSLELIDAYNNNLSGLLPPFSASH, ARLRYLHLGGNYFTGAIPDSYGD, LAALEYLGLNGNTLSGHVPVSLSRL, LGALLRLDMSSCNLTGPVPPELGRL, QRLDTLFLQWNRLSGEIPPQLGDL, SSLASLDLSVNDLAGEIPPSLANL, NLKLLNLFRNHLRGSIPDFVAGF, AQLEVLQLWDNNLTGNIPAGLGKN, GRLKTLDLATNHLTGPIPADLCAG, RLEMLVLMENGLFGPIPDSLGDC, KTLTRVRLAKNFLTGPVPAGLFNL, QANMVELTDNLLTGELPDVIGG, DKIGMLLLGNNGIGGRIPPAIGNL, PALQTLSLESNNFSGALPPEIGNL, NLSRLNVSGNALTGAIPDELIRC, SLAAVDLSRNGFSGEIPESITSL, KILCTLNVSRNRLTGELPPEMSNM, and SLTTLDVSYNSLSGPVPMQGQFLV. N-linked (GlcNAc...) asparagine glycans are attached at residues N75, N98, N124, N129, and N159. An N-linked (GlcNAc...) asparagine glycan is attached at N256. An N-linked (GlcNAc...) asparagine glycan is attached at N315. An N-linked (GlcNAc...) asparagine glycan is attached at N352. 3 N-linked (GlcNAc...) asparagine glycosylation sites follow: N495, N509, and N514. Residues N562 and N578 are each glycosylated (N-linked (GlcNAc...) asparagine). N606 is a glycosylation site (N-linked (GlcNAc...) asparagine). The helical transmembrane segment at 647 to 667 threads the bilayer; that stretch reads KKMLVALVAAFAAVAVAFLGA. The Protein kinase domain occupies 704-978; the sequence is VKEDNIIGKG…TMREVVHMLS (275 aa). Residues 710–718 and K731 contribute to the ATP site; that span reads IGKGGAGIV. D828 serves as the catalytic Proton acceptor.

The protein belongs to the protein kinase superfamily. Ser/Thr protein kinase family. In terms of tissue distribution, expressed in shoot apical meristem, and after transition to the reproductive phase, detected in the inflorescence and the floral meristems. Expressed uniformly throughout the meristems. Expressed also in floral organ primordia, such as the palea, lemma, lodicules, stamens, carpels and ovules.

It is found in the membrane. The catalysed reaction is L-seryl-[protein] + ATP = O-phospho-L-seryl-[protein] + ADP + H(+). It catalyses the reaction L-threonyl-[protein] + ATP = O-phospho-L-threonyl-[protein] + ADP + H(+). Receptor-like kinase protein that regulates the size of the floral meristem. The protein is Leucine-rich repeat receptor-like kinase protein FLORAL ORGAN NUMBER1 (FON1) of Oryza sativa subsp. japonica (Rice).